A 348-amino-acid polypeptide reads, in one-letter code: Phosphate acyltransferase (348 aa).

Belongs to the PlsX family. In terms of assembly, homodimer. Probably interacts with PlsY.

The protein localises to the cytoplasm. It catalyses the reaction a fatty acyl-[ACP] + phosphate = an acyl phosphate + holo-[ACP]. It participates in lipid metabolism; phospholipid metabolism. In terms of biological role, catalyzes the reversible formation of acyl-phosphate (acyl-PO(4)) from acyl-[acyl-carrier-protein] (acyl-ACP). This enzyme utilizes acyl-ACP as fatty acyl donor, but not acyl-CoA. This chain is Phosphate acyltransferase, found in Rhizorhabdus wittichii (strain DSM 6014 / CCUG 31198 / JCM 15750 / NBRC 105917 / EY 4224 / RW1) (Sphingomonas wittichii).